A 161-amino-acid chain; its full sequence is Protein-export protein SecB (161 aa).

This sequence belongs to the SecB family. In terms of assembly, homotetramer, a dimer of dimers. One homotetramer interacts with 1 SecA dimer.

Its subcellular location is the cytoplasm. Its function is as follows. One of the proteins required for the normal export of preproteins out of the cell cytoplasm. It is a molecular chaperone that binds to a subset of precursor proteins, maintaining them in a translocation-competent state. It also specifically binds to its receptor SecA. This chain is Protein-export protein SecB, found in Shewanella baltica (strain OS155 / ATCC BAA-1091).